A 395-amino-acid polypeptide reads, in one-letter code: Probable G-protein coupled receptor npr-29 (395 aa).

4 helical membrane passes run 38–58, 66–86, 89–109, and 148–168; these read VVGF…LFAP, ILFY…AMLL, IELV…YLIF, and AIIQ…PVFA. N-linked (GlcNAc...) asparagine glycosylation is present at Asn180. 3 helical membrane-spanning segments follow: residues 202-222, 252-272, and 287-307; these read FWFN…GIIY, VITT…PYWV, and IIII…AYPL.

It belongs to the G-protein coupled receptor 1 family.

Its subcellular location is the cell membrane. Its function is as follows. Not known. Putative receptor. In Caenorhabditis elegans, this protein is Probable G-protein coupled receptor npr-29.